The chain runs to 142 residues: ATP synthase epsilon chain (142 aa).

The protein belongs to the ATPase epsilon chain family. In terms of assembly, F-type ATPases have 2 components, CF(1) - the catalytic core - and CF(0) - the membrane proton channel. CF(1) has five subunits: alpha(3), beta(3), gamma(1), delta(1), epsilon(1). CF(0) has three main subunits: a, b and c.

Its subcellular location is the cell inner membrane. Functionally, produces ATP from ADP in the presence of a proton gradient across the membrane. The sequence is that of ATP synthase epsilon chain from Coxiella burnetii (strain CbuK_Q154) (Coxiella burnetii (strain Q154)).